A 344-amino-acid polypeptide reads, in one-letter code: tRNA N6-adenosine threonylcarbamoyltransferase (344 aa).

Positions 112 and 116 each coordinate Fe cation. Substrate contacts are provided by residues 134-138 (LASGG), D167, G180, and N280. D308 is a Fe cation binding site.

It belongs to the KAE1 / TsaD family. Fe(2+) serves as cofactor.

It localises to the cytoplasm. It catalyses the reaction L-threonylcarbamoyladenylate + adenosine(37) in tRNA = N(6)-L-threonylcarbamoyladenosine(37) in tRNA + AMP + H(+). In terms of biological role, required for the formation of a threonylcarbamoyl group on adenosine at position 37 (t(6)A37) in tRNAs that read codons beginning with adenine. Is involved in the transfer of the threonylcarbamoyl moiety of threonylcarbamoyl-AMP (TC-AMP) to the N6 group of A37, together with TsaE and TsaB. TsaD likely plays a direct catalytic role in this reaction. The protein is tRNA N6-adenosine threonylcarbamoyltransferase of Rickettsia massiliae (strain Mtu5).